A 218-amino-acid chain; its full sequence is Oxidative stress regulator AosR (218 aa).

A CXXXC motif is present at residues 5-9; that stretch reads CGRRC. Cysteine 5 and cysteine 9 form a disulfide bridge.

The protein belongs to the AosR family. In terms of assembly, homodimer. Under oxidative stress, interacts with the extracytoplasmic-function (ECF) RNA polymerase sigma factor SigH.

With respect to regulation, activity is modulated by the formation of a disulfide bound within the N-terminal Cys-X-X-X-Cys (CXXXC) motif. This intramolecular disulfide bond is formed in response to oxidative stress, and results in oxidative stress-dependent interaction with the sigma factor SigH. Transcription factor crucial for intra-mycobacterial redox homeostasis and protection against host-derived oxidative and nitrosative radicals. In response to oxidative stress, interacts with the ECF sigma factor SigH and, in conjunction with SigH, binds to an auxiliary promoter upstream of mec-cysO-cysM, leading to the transcriptional activation of these genes encoding a non-canonical actinomycete-specific cysteine biosynthesis pathway. Increased transcription of mec-cysO-cysM results in enhanced production of L-cysteine and cysteine-derived antioxidant molecules. Increased production of cysteine protects mycobacteria cells from host phagocyte-derived oxidative and nitrosative stress, thus facilitating the mycobacterial growth in the host. In Mycobacterium bovis (strain ATCC BAA-935 / AF2122/97), this protein is Oxidative stress regulator AosR.